The chain runs to 214 residues: Adenylate kinase (214 aa).

10-15 (GAGKGT) is an ATP binding site. Positions 30–59 (STGDMLRAAVKAGSELGKQAKAIMDAGKLV) are NMP. AMP is bound by residues threonine 31, arginine 36, 57–59 (KLV), 85–88 (GFPR), and glutamine 92. Residues 122-159 (GRRVHPGSGRVYHVKFNPPQVEGKDDVTGEDLMTRKDD) are LID. ATP-binding positions include arginine 123 and 132 to 133 (VY). AMP is bound by residues arginine 156 and arginine 167. Position 200 (glutamine 200) interacts with ATP.

It belongs to the adenylate kinase family. As to quaternary structure, monomer.

Its subcellular location is the cytoplasm. It catalyses the reaction AMP + ATP = 2 ADP. It functions in the pathway purine metabolism; AMP biosynthesis via salvage pathway; AMP from ADP: step 1/1. Catalyzes the reversible transfer of the terminal phosphate group between ATP and AMP. Plays an important role in cellular energy homeostasis and in adenine nucleotide metabolism. This is Adenylate kinase from Edwardsiella ictaluri (strain 93-146).